The sequence spans 385 residues: Isocitrate dehydrogenase [NAD] subunit beta, mitochondrial (385 aa).

The N-terminal 34 residues, 1-34 (MAALSGVRWLTRALVSAGNPGAWRGLSTSAAAHA), are a transit peptide targeting the mitochondrion. Lys-199 is modified (N6-acetyllysine).

It belongs to the isocitrate and isopropylmalate dehydrogenases family. As to quaternary structure, heterooligomer of subunits alpha (IDH3A), beta (IDH3B), and gamma (IDH3G) in the apparent ratio of 2:1:1. The heterodimer containing one IDH3A and one IDH3B subunit and the heterodimer containing one IDH3A and one IDH3G subunit assemble into a heterotetramer (which contains two subunits of IDH3A, one of IDH3B and one of IDH3G) and further into the heterooctamer.

The protein localises to the mitochondrion. With respect to regulation, the heterotetramer and the heterodimer composed of IDH3A and IDH3G subunits can be allosterically activated by citrate (CIT) or/and ADP, and the two activators can act independently or synergistically. The heterodimer composed of IDH3A and IDH3B subunits cannot be allosterically regulated and the allosteric regulation of the heterotetramer is through the IDH3G subunit and not the IDH3B subunit. The IDH3G subunit contains the allosteric site which consists of a CIT-binding site and an ADP-binding site, and the binding of CIT and ADP causes conformational changes at the allosteric site which are transmitted to the active site in the catalytic subunit (IDH3A) through a cascade of conformational changes at the heterodimer interface, leading to stabilization of the isocitrate-binding at the active site and thus activation of the enzyme. ATP can activate the heterotetramer and the heterodimer composed of IDH3A and IDH3G subunits at low concentrations but inhibits their activities at high concentrations, whereas ATP exhibits only inhibitory effect on the heterodimer composed of IDH3A and IDH3B subunits. In terms of biological role, plays a structural role to facilitate the assembly and ensure the full activity of the enzyme catalyzing the decarboxylation of isocitrate (ICT) into alpha-ketoglutarate. The heterodimer composed of the alpha (IDH3A) and beta (IDH3B) subunits and the heterodimer composed of the alpha (IDH3A) and gamma (IDH3G) subunits, have considerable basal activity but the full activity of the heterotetramer (containing two subunits of IDH3A, one of IDH3B and one of IDH3G) requires the assembly and cooperative function of both heterodimers. This is Isocitrate dehydrogenase [NAD] subunit beta, mitochondrial (IDH3B) from Homo sapiens (Human).